A 357-amino-acid chain; its full sequence is Histidinol-phosphate aminotransferase (357 aa).

Lys-218 carries the N6-(pyridoxal phosphate)lysine modification.

Belongs to the class-II pyridoxal-phosphate-dependent aminotransferase family. Histidinol-phosphate aminotransferase subfamily. In terms of assembly, homodimer. Pyridoxal 5'-phosphate serves as cofactor.

The enzyme catalyses L-histidinol phosphate + 2-oxoglutarate = 3-(imidazol-4-yl)-2-oxopropyl phosphate + L-glutamate. It participates in amino-acid biosynthesis; L-histidine biosynthesis; L-histidine from 5-phospho-alpha-D-ribose 1-diphosphate: step 7/9. This is Histidinol-phosphate aminotransferase from Chlorobium luteolum (strain DSM 273 / BCRC 81028 / 2530) (Pelodictyon luteolum).